Here is a 163-residue protein sequence, read N- to C-terminus: Crossover junction endodeoxyribonuclease RuvC (163 aa).

Active-site residues include aspartate 4, glutamate 65, and aspartate 138. 3 residues coordinate Mg(2+): aspartate 4, glutamate 65, and aspartate 138.

It belongs to the RuvC family. In terms of assembly, homodimer which binds Holliday junction (HJ) DNA. The HJ becomes 2-fold symmetrical on binding to RuvC with unstacked arms; it has a different conformation from HJ DNA in complex with RuvA. In the full resolvosome a probable DNA-RuvA(4)-RuvB(12)-RuvC(2) complex forms which resolves the HJ. The cofactor is Mg(2+).

The protein localises to the cytoplasm. It carries out the reaction Endonucleolytic cleavage at a junction such as a reciprocal single-stranded crossover between two homologous DNA duplexes (Holliday junction).. Its function is as follows. The RuvA-RuvB-RuvC complex processes Holliday junction (HJ) DNA during genetic recombination and DNA repair. Endonuclease that resolves HJ intermediates. Cleaves cruciform DNA by making single-stranded nicks across the HJ at symmetrical positions within the homologous arms, yielding a 5'-phosphate and a 3'-hydroxyl group; requires a central core of homology in the junction. The consensus cleavage sequence is 5'-(A/T)TT(C/G)-3'. Cleavage occurs on the 3'-side of the TT dinucleotide at the point of strand exchange. HJ branch migration catalyzed by RuvA-RuvB allows RuvC to scan DNA until it finds its consensus sequence, where it cleaves and resolves the cruciform DNA. The polypeptide is Crossover junction endodeoxyribonuclease RuvC (Corynebacterium diphtheriae (strain ATCC 700971 / NCTC 13129 / Biotype gravis)).